The sequence spans 767 residues: Photosystem I P700 chlorophyll a apoprotein A1 (767 aa).

A run of 8 helical transmembrane segments spans residues 72–95, 158–181, 197–221, 305–323, 364–387, 403–429, 451–473, and 548–566; these read IFSA…FHGA, LMSL…FHYH, LNHH…HVSL, IAHH…GHMY, WHAQ…QHMY, IGLF…IAMI, ALIS…LYIH, and FMVH…LILL. The [4Fe-4S] cluster site is built by Cys590 and Cys599. A run of 2 helical transmembrane segments spans residues 606–627 and 681–703; these read HVFL…HFSW and TSAY…MFLF. Residue His692 participates in chlorophyll a' binding. Residues Met700 and Tyr708 each coordinate chlorophyll a. Trp709 provides a ligand contact to phylloquinone. The helical transmembrane segment at 741-761 threads the bilayer; sequence AVGVAHYLLGGIATTWAFFHA.

This sequence belongs to the PsaA/PsaB family. As to quaternary structure, the PsaA/B heterodimer binds the P700 chlorophyll special pair and subsequent electron acceptors. PSI consists of a core antenna complex that captures photons, and an electron transfer chain that converts photonic excitation into a charge separation. The cyanobacterial PSI reaction center is composed of one copy each of PsaA,B,C,D,E,F,I,J,K,L,M and X, and forms trimeric complexes. The cofactor is PSI electron transfer chain: 5 chlorophyll a, 1 chlorophyll a', 2 phylloquinones and 3 4Fe-4S clusters. PSI core antenna: 90 chlorophyll a, 22 carotenoids, 3 phospholipids and 1 galactolipid. P700 is a chlorophyll a/chlorophyll a' dimer, A0 is one or more chlorophyll a, A1 is one or both phylloquinones and FX is a shared 4Fe-4S iron-sulfur center..

The protein localises to the cellular thylakoid membrane. The catalysed reaction is reduced [plastocyanin] + hnu + oxidized [2Fe-2S]-[ferredoxin] = oxidized [plastocyanin] + reduced [2Fe-2S]-[ferredoxin]. Functionally, psaA and PsaB bind P700, the primary electron donor of photosystem I (PSI), as well as the electron acceptors A0, A1 and FX. PSI is a plastocyanin/cytochrome c6-ferredoxin oxidoreductase, converting photonic excitation into a charge separation, which transfers an electron from the donor P700 chlorophyll pair to the spectroscopically characterized acceptors A0, A1, FX, FA and FB in turn. Oxidized P700 is reduced on the lumenal side of the thylakoid membrane by plastocyanin or cytochrome c6. The sequence is that of Photosystem I P700 chlorophyll a apoprotein A1 from Synechococcus sp. (strain WH7803).